Consider the following 62-residue polypeptide: Large ribosomal subunit protein bL28 (62 aa).

A disordered region spans residues 1–27 (MARKCVVTGRQTRSGNQRSHAMNSNKR). Residues 9–26 (GRQTRSGNQRSHAMNSNK) are compositionally biased toward polar residues.

The protein belongs to the bacterial ribosomal protein bL28 family.

The polypeptide is Large ribosomal subunit protein bL28 (Oceanobacillus iheyensis (strain DSM 14371 / CIP 107618 / JCM 11309 / KCTC 3954 / HTE831)).